Consider the following 1816-residue polypeptide: Kinesin-like protein KIF1B (1816 aa).

Ser2 bears the N-acetylserine mark. One can recognise a Kinesin motor domain in the interval 5–354 (SVKVAVRVRP…LRYADRAKQI (350 aa)). 97–104 (GQTGAGKS) contributes to the ATP binding site. An interaction with KIFBP region spans residues 270–350 (NINKSLTTLG…TLSTLRYADR (81 aa)). The stretch at 365 to 386 (NAKLVRELKEEVTRLKDLLRAQ) forms a coiled coil. A disordered region spans residues 431–450 (FSTASMGSLTSSPSSCSLSS). Low complexity predominate over residues 432–450 (STASMGSLTSSPSSCSLSS). The stretch at 470-502 (GEEAIERLKESEKIIAELNETWEEKLRKTEAIR) forms a coiled coil. The FHA domain maps to 556–612 (TRVGQADAERRQDIVLSGAHIKEEHCIFRSERSNSGEVIVTLEPCERSETYVNGKRV). 2 positions are modified to phosphothreonine: Thr647 and Thr652. Phosphoserine is present on residues Gln663 and Glu665. Coiled-coil stretches lie at residues 668–737 (EKQG…EEEV) and 841–869 (SLEK…AQDE). Ser1054 and Ser1057 each carry phosphoserine. Position 1075 is a phosphothreonine (Thr1075). Asn1141, Ser1416, Ser1454, and Ser1487 each carry phosphoserine. Positions 1550-1570 (STTTFESAITPSESSGYDSGD) are disordered. The segment covering 1554–1566 (FESAITPSESSGY) has biased composition (polar residues). Ser1573, Ser1603, Ser1610, and Ser1613 each carry phosphoserine. The segment at 1617 to 1660 (RDPSESSFSSATLTPSSTCPSLVDSRSNSLDQKTPEANSRASSP) is disordered. Low complexity predominate over residues 1621 to 1634 (ESSFSSATLTPSST). The segment covering 1640–1658 (DSRSNSLDQKTPEANSRAS) has biased composition (polar residues). Positions 1702-1799 (VSKKGYLHFK…WLYAFNPLLA (98 aa)) constitute a PH domain.

It belongs to the TRAFAC class myosin-kinesin ATPase superfamily. Kinesin family. Unc-104 subfamily. Monomer. Interacts with KIFBP; positively regulates KIF1B microtubule motor activity. Interacts (via C-terminus end of the kinesin-motor domain) with CHP1; the interaction occurs in a calcium-dependent manner. In terms of assembly, interacts with MADD (via death domain); links this isoform to Rab3-carrying vesicles in anterograde synaptic vesicle transport. As to expression, isoform 3 is abundant in the skeletal muscle. It is also expressed in fetal brain, lung and kidney, and adult heart, placenta, testis, ovary and small intestine. Isoform 2 is abundant in the brain and also expressed in fetal heart, lung, liver and kidney, and adult skeletal muscle, placenta, liver, kidney, heart, spleen, thymus, prostate, testis, ovary, small intestine, colon and pancreas.

It localises to the cytoplasm. The protein localises to the cytoskeleton. Its subcellular location is the cytoplasmic vesicle. It is found in the secretory vesicle. The protein resides in the synaptic vesicle membrane. It localises to the mitochondrion. The catalysed reaction is ATP + H2O + a kinesin associated with a microtubule at position (n) = ADP + phosphate a kinesin associated with a microtubule at position (n+1, toward the plus end).. Functionally, has a plus-end-directed microtubule motor activity and functions as a motor for transport of vesicles and organelles along microtubules. In terms of biological role, has a plus-end-directed microtubule motor activity and functions as a motor for anterograde synaptic vesicle transport along axonal microtubules from the cell body to the presynapse in neuronal cells. Functions as a downstream effector in a developmental apoptotic pathway that is activated when nerve growth factor (NGF) becomes limiting for neuronal progenitor cells. Its function is as follows. Has a plus-end-directed microtubule motor activity and functions as a motor for anterograde transport of mitochondria. This Homo sapiens (Human) protein is Kinesin-like protein KIF1B.